The chain runs to 1740 residues: SH3 and multiple ankyrin repeat domains protein 3 (1740 aa).

Residues 1–75 (MDGPGASAVV…KFLDEERLLQ (75 aa)) form an intramolecular interaction with the ANK repeats region. Y122 is modified (phosphotyrosine). ANK repeat units lie at residues 148-181 (SGEC…FRTR), 182-214 (DGLT…YKDS), 215-245 (RGLT…QLGT), 249-278 (NGWQ…NMGA), 282-311 (SGNT…NKDV), and 315-345 (NSQT…DVVP). Residues 354–466 (KRRRLAGPSG…PPPRGPKRKL (113 aa)) are disordered. A phosphoserine mark is found at S373, S375, S387, and S394. A compositionally biased stretch (basic and acidic residues) spans 404-415 (LQEEKDRDRDGE). The span at 444–460 (APGPGPASPAPPAPPPR) shows a compositional bias: pro residues. The 60-residue stretch at 470 to 529 (VPGRKFIAVKAHSPQGEGEIPLHRGEAVKVLSIGEGGFWEGTVKGRTGWFPADCVEEVQM) folds into the SH3 domain. A Phosphoserine modification is found at S482. Y555 carries the phosphotyrosine modification. The PDZ domain occupies 570–664 (VAILQKRDHE…RLVMKVVSVT (95 aa)). Residues 664–687 (TRKPEEDSARRRAPPPPKRAPSTT) form a disordered region. Positions 677 to 684 (PPPPKRAP) are required for interaction with ABI1. Phosphoserine is present on residues S694, S781, S790, and S801. Disordered stretches follow at residues 759-855 (RQGL…RSSF), 868-1053 (AGLY…QPSR), 1115-1199 (AARE…MILS), 1211-1463 (LIVV…GPAR), and 1476-1518 (GDPV…EPVG). The segment covering 812-845 (IPPPPQTAPPPPPAPYYFDSGPPPTFSPPPPPPG) has biased composition (pro residues). Phosphoserine occurs at positions 891 and 898. T913 is subject to Phosphothreonine. Position 931 is a phosphotyrosine (Y931). The residue at position 966 (R966) is an Asymmetric dimethylarginine. The span at 1017-1027 (VKERRLEERRR) shows a compositional bias: basic and acidic residues. The segment covering 1123–1132 (SQTPSRSPTP) has biased composition (polar residues). At T1131 the chain carries Phosphothreonine. S1135, S1160, S1164, and S1167 each carry phosphoserine. Residues 1175–1195 (ARREAEKPTREERKSPEDKKS) are compositionally biased toward basic and acidic residues. T1235 is modified (phosphothreonine). Composition is skewed to pro residues over residues 1252–1262 (MPSPRAQPPGS) and 1322–1334 (TPPP…PTTV). S1254 is modified (phosphoserine). Over residues 1335-1344 (PSPASGKPSS) the composition is skewed to low complexity. Positions 1361-1371 (ADTRSSSDPHL) are enriched in basic and acidic residues. Low complexity predominate over residues 1372 to 1393 (ETTSTISTVSSMSTLSSESGEL). The SH3-binding motif lies at 1411–1417 (PPVPPKP). Position 1421 is a phosphoserine (S1421). Residues 1495-1515 (ISELSSRLQQLNKDTRSLGEE) adopt a coiled-coil conformation. The segment covering 1496–1506 (SELSSRLQQLN) has biased composition (polar residues). S1511, S1522, S1530, and S1549 each carry phosphoserine. Disordered regions lie at residues 1556 to 1594 (ISAQ…PASL) and 1637 to 1673 (VRSV…QQKP). Positions 1637–1647 (VRSVSARSRSP) are enriched in low complexity. Residues S1644, S1646, and S1648 each carry the phosphoserine modification. Pro residues predominate over residues 1648-1658 (SPSPLPSPSPG). Positions 1659–1668 (SGPSAGPRRP) are enriched in low complexity. Positions 1677–1740 (WSKFDVGDWL…ERALRQLDGS (64 aa)) constitute an SAM domain.

This sequence belongs to the SHANK family. As to quaternary structure, may homomultimerize via its SAM domain. Interacts with BAIAP2, DBNL and SLC17A7/VGLUT1. Interacts with DLGAP1/GKAP, GRM1/MGLUR1, GRM5/MGLUR5 and LZTS3 C-termini via its PDZ domain. Interacts with ABI1, HOMER1, HOMER2, HOMER3 and CTTN/cortactin SH3 domain. Is part of a complex with DLG4/PSD-95 and DLGAP1/GKAP. Interacts (via PDZ domain) with the GRIA1 subunit of the AMPA receptor (via PDZ-binding motif). Interacts with WASF1 and CYFIP2; the interactions mediate the association of SHANK3 with the WAVE1 complex. Interacts with ARPC2; the interaction probably mediates the association of SHANK3 with the Arp2/3 complex. Interacts (via ANK repeats) with SHARPIN and SPTAN1. Interacts (via PDZ domain) with ARHGAP44 (probably via PDZ-binding motif); the interaction takes place in dendritic spines and promotes GRIA1 exocytosis. Interacts with CAMK2A. Interacts with DIP2A. Interacts with ADGRL3. In terms of tissue distribution, widely expressed in brain (at protein level).

It is found in the cytoplasm. The protein localises to the postsynaptic density. It localises to the cell projection. The protein resides in the dendritic spine. Major scaffold postsynaptic density protein which interacts with multiple proteins and complexes to orchestrate the dendritic spine and synapse formation, maturation and maintenance. Interconnects receptors of the postsynaptic membrane including NMDA-type and metabotropic glutamate receptors via complexes with GKAP/PSD-95 and HOMER, respectively, and the actin-based cytoskeleton. Plays a role in the structural and functional organization of the dendritic spine and synaptic junction through the interaction with Arp2/3 and WAVE1 complex as well as the promotion of the F-actin clusters. By way of this control of actin dynamics, participates in the regulation of developing neurons growth cone motility and the NMDA receptor-signaling. Also modulates GRIA1 exocytosis and GRM5/MGLUR5 expression and signaling to control the AMPA and metabotropic glutamate receptor-mediated synaptic transmission and plasticity. May be required at an early stage of synapse formation and be inhibited by IGF1 to promote synapse maturation. The sequence is that of SH3 and multiple ankyrin repeat domains protein 3 (Shank3) from Rattus norvegicus (Rat).